We begin with the raw amino-acid sequence, 479 residues long: Glutamyl-tRNA(Gln) amidotransferase subunit A (479 aa).

Catalysis depends on charge relay system residues lysine 71 and serine 146. The Acyl-ester intermediate role is filled by serine 170.

It belongs to the amidase family. GatA subfamily. As to quaternary structure, heterotrimer of A, B and C subunits.

The enzyme catalyses L-glutamyl-tRNA(Gln) + L-glutamine + ATP + H2O = L-glutaminyl-tRNA(Gln) + L-glutamate + ADP + phosphate + H(+). Allows the formation of correctly charged Gln-tRNA(Gln) through the transamidation of misacylated Glu-tRNA(Gln) in organisms which lack glutaminyl-tRNA synthetase. The reaction takes place in the presence of glutamine and ATP through an activated gamma-phospho-Glu-tRNA(Gln). This chain is Glutamyl-tRNA(Gln) amidotransferase subunit A, found in Lactobacillus johnsonii (strain CNCM I-12250 / La1 / NCC 533).